The following is a 347-amino-acid chain: GMP reductase (347 aa).

108 to 131 provides a ligand contact to NADP(+); sequence DDFTKTRQILAMSSALRFICVDVA. K(+) is bound by residues Gly-181 and Gly-183. Cys-186 (thioimidate intermediate) is an active-site residue. Residue 216–239 coordinates NADP(+); that stretch reads IVGDGGCTCPGDVAKAFGGGADFV.

It belongs to the IMPDH/GMPR family. GuaC type 1 subfamily. Homotetramer.

It catalyses the reaction IMP + NH4(+) + NADP(+) = GMP + NADPH + 2 H(+). Catalyzes the irreversible NADPH-dependent deamination of GMP to IMP. It functions in the conversion of nucleobase, nucleoside and nucleotide derivatives of G to A nucleotides, and in maintaining the intracellular balance of A and G nucleotides. The protein is GMP reductase of Aeromonas hydrophila subsp. hydrophila (strain ATCC 7966 / DSM 30187 / BCRC 13018 / CCUG 14551 / JCM 1027 / KCTC 2358 / NCIMB 9240 / NCTC 8049).